The chain runs to 544 residues: MAAKEVKFGRDARERLLRGVDILADAVKVTLGPKGRNVVIDKSFGAPRITKDGVSVAKEIELENKFENMGAQMLREVASKTNDIAGDGTTTATVLGQAIVQEGVKAVAASMNPMDLKRGIDAAVEAVVADLFKKAKKIQTSEEIAQVATISANGAEDIGKMIADAMEKVGNEGVITVEEAKTAETELEVVEGMQFDRGYLSPYFVTNSEKMMVDLDDPYILIHEKKLSNLQSLLPVLEAVVQSGKPLLIIAEDVEGEALATLVVNKLRGGLKIAAVKAPGFGDRRKAMLEDIAVLTSGQVISEDVGIKLENVTLEMLGRAKKVHVSKETTTIVDGAGQKSEINARVSQIKAQIEETTSDYDREKLQERLAKLAGGVAVIRVGGSTEVEVKEKKDRVDDALNATRAAVEEGIVPGGGTALLRAAKALSIKGKNPDQEAGIGIIRRALQAPARQIAHNAGEEAAVIVGKVLENCSDTFGYNTATAQFGDLISFGIVDPVKVVRSALQNAASIASLLITTEAMVAEVPKKEAAAPAMPGGGMGGMDF.

Residues 30–33 (TLGP), K51, 87–91 (DGTTT), G415, and D495 each bind ATP.

Belongs to the chaperonin (HSP60) family. As to quaternary structure, forms a cylinder of 14 subunits composed of two heptameric rings stacked back-to-back. Interacts with the co-chaperonin GroES.

The protein resides in the cytoplasm. It carries out the reaction ATP + H2O + a folded polypeptide = ADP + phosphate + an unfolded polypeptide.. In terms of biological role, together with its co-chaperonin GroES, plays an essential role in assisting protein folding. The GroEL-GroES system forms a nano-cage that allows encapsulation of the non-native substrate proteins and provides a physical environment optimized to promote and accelerate protein folding. The polypeptide is Chaperonin GroEL (Bartonella bacilliformis (strain ATCC 35685 / KC583 / Herrer 020/F12,63)).